We begin with the raw amino-acid sequence, 385 residues long: Homoserine O-succinyltransferase (385 aa).

Positions 51–360 (NAVLICHALS…DSPHGHDAFL (310 aa)) constitute an AB hydrolase-1 domain. The Nucleophile role is filled by Ser-157. Arg-227 provides a ligand contact to substrate. Residues Asp-323 and His-356 contribute to the active site. Substrate is bound at residue Asp-357.

It belongs to the AB hydrolase superfamily. MetX family. In terms of assembly, homodimer.

It is found in the cytoplasm. The enzyme catalyses L-homoserine + succinyl-CoA = O-succinyl-L-homoserine + CoA. It participates in amino-acid biosynthesis; L-methionine biosynthesis via de novo pathway; O-succinyl-L-homoserine from L-homoserine: step 1/1. Functionally, transfers a succinyl group from succinyl-CoA to L-homoserine, forming succinyl-L-homoserine. This chain is Homoserine O-succinyltransferase, found in Hahella chejuensis (strain KCTC 2396).